The following is a 342-amino-acid chain: S-adenosylmethionine:tRNA ribosyltransferase-isomerase (342 aa).

It belongs to the QueA family. In terms of assembly, monomer.

The protein localises to the cytoplasm. It carries out the reaction 7-aminomethyl-7-carbaguanosine(34) in tRNA + S-adenosyl-L-methionine = epoxyqueuosine(34) in tRNA + adenine + L-methionine + 2 H(+). Its pathway is tRNA modification; tRNA-queuosine biosynthesis. Its function is as follows. Transfers and isomerizes the ribose moiety from AdoMet to the 7-aminomethyl group of 7-deazaguanine (preQ1-tRNA) to give epoxyqueuosine (oQ-tRNA). In Novosphingobium aromaticivorans (strain ATCC 700278 / DSM 12444 / CCUG 56034 / CIP 105152 / NBRC 16084 / F199), this protein is S-adenosylmethionine:tRNA ribosyltransferase-isomerase.